The sequence spans 269 residues: GTP cyclohydrolase FolE2 (269 aa).

The protein belongs to the GTP cyclohydrolase IV family.

The catalysed reaction is GTP + H2O = 7,8-dihydroneopterin 3'-triphosphate + formate + H(+). It functions in the pathway cofactor biosynthesis; 7,8-dihydroneopterin triphosphate biosynthesis; 7,8-dihydroneopterin triphosphate from GTP: step 1/1. Its function is as follows. Converts GTP to 7,8-dihydroneopterin triphosphate. The polypeptide is GTP cyclohydrolase FolE2 (Burkholderia multivorans (strain ATCC 17616 / 249)).